Consider the following 333-residue polypeptide: L-lactate dehydrogenase B chain (333 aa).

NAD(+) is bound by residues 29 to 57 and arginine 99; that span reads GQVG…LEDK. Positions 106, 138, and 169 each coordinate substrate. Asparagine 138 is a binding site for NAD(+). Histidine 193 functions as the Proton acceptor in the catalytic mechanism. Threonine 248 is a substrate binding site.

This sequence belongs to the LDH/MDH superfamily. LDH family. Homotetramer.

It is found in the cytoplasm. It catalyses the reaction (S)-lactate + NAD(+) = pyruvate + NADH + H(+). Its pathway is fermentation; pyruvate fermentation to lactate; (S)-lactate from pyruvate: step 1/1. In terms of biological role, interconverts simultaneously and stereospecifically pyruvate and lactate with concomitant interconversion of NADH and NAD(+). The protein is L-lactate dehydrogenase B chain (LDHB) of Pelodiscus sinensis japonicus (Chinese soft-shelled turtle).